Reading from the N-terminus, the 296-residue chain is 4-hydroxybenzoate octaprenyltransferase (296 aa).

8 helical membrane-spanning segments follow: residues 28 to 48 (PIGIYLLLWPTLSAVWIAGNG), 52 to 72 (LANVLIFGLGVVLMRAAGCCI), 102 to 122 (ALTLFAILVGVSFLLVLCTNS), 145 to 167 (TYYPQVVLGAAYSWGIPMAFTAA), 174 to 196 (GAWLLYIANLLWTVGYDTYYAMV), 219 to 239 (SIILTLQLLSLGCLLLAGSRF), 241 to 261 (LGGWFHLGLLGAAACFAWEYW), and 275 to 295 (FLHNHWAGMLVFIGVVLDYAL).

The protein belongs to the UbiA prenyltransferase family. The cofactor is Mg(2+).

It localises to the cell inner membrane. The enzyme catalyses all-trans-octaprenyl diphosphate + 4-hydroxybenzoate = 4-hydroxy-3-(all-trans-octaprenyl)benzoate + diphosphate. Its pathway is cofactor biosynthesis; ubiquinone biosynthesis. Its function is as follows. Catalyzes the prenylation of para-hydroxybenzoate (PHB) with an all-trans polyprenyl group. Mediates the second step in the final reaction sequence of ubiquinone-8 (UQ-8) biosynthesis, which is the condensation of the polyisoprenoid side chain with PHB, generating the first membrane-bound Q intermediate 3-octaprenyl-4-hydroxybenzoate. This is 4-hydroxybenzoate octaprenyltransferase from Pseudomonas putida (strain ATCC 700007 / DSM 6899 / JCM 31910 / BCRC 17059 / LMG 24140 / F1).